An 817-amino-acid chain; its full sequence is Transcription factor yanR (817 aa).

The zn(2)-C6 fungal-type DNA-binding region spans 19–46 (CIVCRRRKVRCGREHPECANCVRMKENC). Disordered stretches follow at residues 102–161 (GNVL…PQVD), 180–218 (HHAS…YSGL), and 733–775 (SLSS…VADS). Pro residues predominate over residues 113-127 (LPRPTISPASAPPPQ). The segment covering 146–158 (SSTILTPAPSSHP) has biased composition (polar residues). Over residues 184-195 (SRAGTSRTSSVS) the composition is skewed to low complexity. Composition is skewed to polar residues over residues 208–217 (APSTSTSYSG) and 748–760 (EAPS…QMPS).

It is found in the nucleus. Transcription factor that regulates the expression of the gene cluster that mediates the biosynthesis of yanuthone D, a fungal isoprenoid epoxycyclohexenone that acts as an antibiotic against fungi and bacteria. The sequence is that of Transcription factor yanR from Aspergillus niger (strain ATCC 1015 / CBS 113.46 / FGSC A1144 / LSHB Ac4 / NCTC 3858a / NRRL 328 / USDA 3528.7).